The primary structure comprises 99 residues: Large ribosomal subunit protein uL23 (99 aa).

Belongs to the universal ribosomal protein uL23 family. As to quaternary structure, part of the 50S ribosomal subunit. Contacts protein L29, and trigger factor when it is bound to the ribosome.

Functionally, one of the early assembly proteins it binds 23S rRNA. One of the proteins that surrounds the polypeptide exit tunnel on the outside of the ribosome. Forms the main docking site for trigger factor binding to the ribosome. The protein is Large ribosomal subunit protein uL23 of Francisella tularensis subsp. tularensis (strain SCHU S4 / Schu 4).